Consider the following 188-residue polypeptide: Elongation factor P (188 aa).

It belongs to the elongation factor P family.

The protein resides in the cytoplasm. Its pathway is protein biosynthesis; polypeptide chain elongation. In terms of biological role, involved in peptide bond synthesis. Stimulates efficient translation and peptide-bond synthesis on native or reconstituted 70S ribosomes in vitro. Probably functions indirectly by altering the affinity of the ribosome for aminoacyl-tRNA, thus increasing their reactivity as acceptors for peptidyl transferase. In Leptospira interrogans serogroup Icterohaemorrhagiae serovar copenhageni (strain Fiocruz L1-130), this protein is Elongation factor P.